Consider the following 167-residue polypeptide: Secreted LysM effector Blys6 (167 aa).

An N-terminal signal peptide occupies residues 1-16; it reads MKGLCVAACTLVLAAA. Residues 109-162 enclose the LysM domain; sequence KWYRIRRGDDCGPVASEFGISADQLIEWNPWLSADVDGTHYPCMNIWPTDNLCV.

The protein belongs to the secreted LysM effector family.

Might have a role in sequestration of chitin oligosaccharides (breakdown products of fungal cell walls that are released during invasion and act as triggers of host immunity) to dampen host defense. This Beauveria bassiana (strain ARSEF 2860) (White muscardine disease fungus) protein is Secreted LysM effector Blys6.